A 153-amino-acid polypeptide reads, in one-letter code: Methylglyoxal synthase (153 aa).

The MGS-like domain maps to 3-153 (DQVNRPKGVT…SYLSRDVPGN (151 aa)). Residues His-19, Lys-23, 45–48 (TGTT), and 65–66 (SG) each bind substrate. The active-site Proton donor/acceptor is Asp-71. Residue His-98 coordinates substrate.

The protein belongs to the methylglyoxal synthase family.

The catalysed reaction is dihydroxyacetone phosphate = methylglyoxal + phosphate. Its function is as follows. Catalyzes the formation of methylglyoxal from dihydroxyacetone phosphate. The chain is Methylglyoxal synthase from Hahella chejuensis (strain KCTC 2396).